A 338-amino-acid chain; its full sequence is Ferrochelatase (338 aa).

2 residues coordinate Fe cation: H207 and E293.

This sequence belongs to the ferrochelatase family.

The protein resides in the cytoplasm. The catalysed reaction is heme b + 2 H(+) = protoporphyrin IX + Fe(2+). It functions in the pathway porphyrin-containing compound metabolism; protoheme biosynthesis; protoheme from protoporphyrin-IX: step 1/1. Catalyzes the ferrous insertion into protoporphyrin IX. This chain is Ferrochelatase, found in Shewanella denitrificans (strain OS217 / ATCC BAA-1090 / DSM 15013).